Consider the following 458-residue polypeptide: ATP synthase subunit beta (458 aa).

148–155 (GGAGVGKT) provides a ligand contact to ATP.

The protein belongs to the ATPase alpha/beta chains family. F-type ATPases have 2 components, CF(1) - the catalytic core - and CF(0) - the membrane proton channel. CF(1) has five subunits: alpha(3), beta(3), gamma(1), delta(1), epsilon(1). CF(0) has three main subunits: a(1), b(2) and c(9-12). The alpha and beta chains form an alternating ring which encloses part of the gamma chain. CF(1) is attached to CF(0) by a central stalk formed by the gamma and epsilon chains, while a peripheral stalk is formed by the delta and b chains.

Its subcellular location is the cell inner membrane. It catalyses the reaction ATP + H2O + 4 H(+)(in) = ADP + phosphate + 5 H(+)(out). Functionally, produces ATP from ADP in the presence of a proton gradient across the membrane. The catalytic sites are hosted primarily by the beta subunits. This chain is ATP synthase subunit beta, found in Pseudomonas fluorescens (strain Pf0-1).